A 1221-amino-acid chain; its full sequence is DNA-directed RNA polymerase subunit beta' (1221 aa).

4 residues coordinate Zn(2+): Cys60, Cys62, Cys75, and Cys78. Mg(2+) contacts are provided by Asp449, Asp451, and Asp453. 4 residues coordinate Zn(2+): Cys821, Cys896, Cys903, and Cys906.

The protein belongs to the RNA polymerase beta' chain family. In terms of assembly, the RNAP catalytic core consists of 2 alpha, 1 beta, 1 beta' and 1 omega subunit. When a sigma factor is associated with the core the holoenzyme is formed, which can initiate transcription. It depends on Mg(2+) as a cofactor. Zn(2+) is required as a cofactor.

It catalyses the reaction RNA(n) + a ribonucleoside 5'-triphosphate = RNA(n+1) + diphosphate. Functionally, DNA-dependent RNA polymerase catalyzes the transcription of DNA into RNA using the four ribonucleoside triphosphates as substrates. This is DNA-directed RNA polymerase subunit beta' from Lactobacillus delbrueckii subsp. bulgaricus (strain ATCC BAA-365 / Lb-18).